A 397-amino-acid polypeptide reads, in one-letter code: Calponin-like protein clik-2 (397 aa).

Calponin-like repeat units lie at residues 29–54, 73–98, 119–144, 161–189, 209–234, and 255–280; these read LSQQAGTNKFETQKGMTAVGMPRWNI, LRVQCGTNQYASQKGETPIGASRFQV, IPKQAGDYGLASQAGEVSMGGHRNQV, LCFQNGTNLFASQTGMSAPPGLGAVRQAT, TPWYSGQNKFATQAGSGGFLKVRDVL, and VPLQSGTNKLASQRGMTGFGTPRNTQ. Residues 301 to 397 form a disordered region; sequence EETKPPGSAS…EEEEEEEEDE (97 aa). Basic and acidic residues predominate over residues 321–332; sequence KFEERESSRQSE. Acidic residues-rich tracts occupy residues 344–360 and 367–397; these read VEPEPEEEEEEEEEEKI and EEEEEEEEEEEEEEEELEEEEEEEEEEEEDE.

This sequence belongs to the calponin family. Expressed in pharyngeal muscle cells (at protein level).

Its function is as follows. Required for pharyngeal pumping. This Caenorhabditis elegans protein is Calponin-like protein clik-2.